The sequence spans 266 residues: Cytosolic Fe-S cluster assembly factor Nubp2 homolog (266 aa).

Gly-14–Ser-21 contacts ATP. [4Fe-4S] cluster-binding residues include Cys-188 and Cys-191.

Belongs to the Mrp/NBP35 ATP-binding proteins family. Nubp2/CFD1 subfamily. As to quaternary structure, heterotetramer of 2 Nubp1 and 2 Nubp2 chains. [4Fe-4S] cluster is required as a cofactor.

It localises to the cytoplasm. Component of the cytosolic iron-sulfur (Fe/S) protein assembly (CIA) machinery. Required for maturation of extramitochondrial Fe-S proteins. The Nubp1-Nubp2 heterotetramer forms a Fe-S scaffold complex, mediating the de novo assembly of an Fe-S cluster and its transfer to target apoproteins. The sequence is that of Cytosolic Fe-S cluster assembly factor Nubp2 homolog from Drosophila virilis (Fruit fly).